Reading from the N-terminus, the 763-residue chain is Long-chain-fatty-acid--CoA ligase ACSBG2 (763 aa).

A disordered region spans residues cysteine 47–tryptophan 78. The span at proline 51 to glutamine 61 shows a compositional bias: basic and acidic residues. The segment covering methionine 62–tryptophan 78 has biased composition (polar residues). ATP contacts are provided by residues threonine 281–lysine 289, glutamate 472–serine 477, aspartate 550, arginine 565, and lysine 678.

Belongs to the ATP-dependent AMP-binding enzyme family. Bubblegum subfamily.

The protein resides in the cytoplasm. It carries out the reaction a long-chain fatty acid + ATP + CoA = a long-chain fatty acyl-CoA + AMP + diphosphate. It catalyses the reaction (5Z,8Z,11Z,14Z)-eicosatetraenoate + ATP + CoA = (5Z,8Z,11Z,14Z)-eicosatetraenoyl-CoA + AMP + diphosphate. The enzyme catalyses hexadecanoate + ATP + CoA = hexadecanoyl-CoA + AMP + diphosphate. The catalysed reaction is (9Z)-octadecenoate + ATP + CoA = (9Z)-octadecenoyl-CoA + AMP + diphosphate. It carries out the reaction (9Z,12Z)-octadecadienoate + ATP + CoA = (9Z,12Z)-octadecadienoyl-CoA + AMP + diphosphate. It catalyses the reaction tetracosanoate + ATP + CoA = tetracosanoyl-CoA + AMP + diphosphate. Functionally, mediates activation of long-chain fatty acids for both synthesis of cellular lipids, and degradation via beta-oxidation. In terms of biological role, catalyzes the conversion of fatty acids such as long chain and very long-chain fatty acids to their active form acyl-CoAs for both synthesis of cellular lipids, and degradation via beta-oxidation. Can activate diverse saturated, monosaturated and polyunsaturated fatty acids. The chain is Long-chain-fatty-acid--CoA ligase ACSBG2 from Gallus gallus (Chicken).